Consider the following 301-residue polypeptide: Recombination-associated protein RdgC (301 aa).

It belongs to the RdgC family.

It is found in the cytoplasm. It localises to the nucleoid. In terms of biological role, may be involved in recombination. The polypeptide is Recombination-associated protein RdgC (Stenotrophomonas maltophilia (strain R551-3)).